The sequence spans 669 residues: Glutamate--cysteine ligase (669 aa).

Belongs to the glutamate--cysteine ligase type 3 family. As to quaternary structure, heterodimer of a catalytic heavy chain and a regulatory light chain.

The enzyme catalyses L-cysteine + L-glutamate + ATP = gamma-L-glutamyl-L-cysteine + ADP + phosphate + H(+). The protein operates within sulfur metabolism; glutathione biosynthesis; glutathione from L-cysteine and L-glutamate: step 1/2. Functionally, catalyzes the ATP-dependent ligation of L-glutamate and L-cysteine and participates in the first and rate-limiting step in glutathione biosynthesis. This is Glutamate--cysteine ligase (gcs1) from Schizosaccharomyces pombe (strain 972 / ATCC 24843) (Fission yeast).